The primary structure comprises 73 residues: Omega-conotoxin CVID (73 aa).

The N-terminal stretch at 1-22 is a signal peptide; it reads MKLTCVVIVAVLLLTACQLITA. The propeptide occupies 23-45; that stretch reads DDSRGTQKHRALRSDTKLSMSTR. Intrachain disulfides connect cysteine 46–cysteine 61, cysteine 53–cysteine 65, and cysteine 60–cysteine 72. At cysteine 72 the chain carries Cysteine amide.

Belongs to the conotoxin O1 superfamily. In terms of tissue distribution, expressed by the venom duct.

It localises to the secreted. In terms of biological role, omega-conotoxins act at presynaptic membranes, they bind and block voltage-gated calcium channels. This toxin inhibits neurotransmitter release, it blocks N-type calcium channels, probably a N-type (Cav2.2/CACNA1B) calcium channel variant. This is Omega-conotoxin CVID from Conus catus (Cat cone).